The sequence spans 207 residues: MESESVKFGGPRELGGALDLITQYKLLPHHEFFCKRSLPESLSDAHYLHNLVGDTEIRKGEGMQLDQLIPNASLSSRDTNARIQPFVLDELKEAFELNDTAPVELPPAEKGAPTTVSKSKSESKDKDRKHRKHKDKKEKDREHKKHKHKHKDRIKDKDKDKDRDKKKEKSGHHDKKRKNNGTEDADDVQRHKKSKHKSSKLDEMGAM.

The tract at residues 99–207 is disordered; the sequence is DTAPVELPPA…SSKLDEMGAM (109 aa). Over residues 127–152 the composition is skewed to basic residues; the sequence is DRKHRKHKDKKEKDREHKKHKHKHKD. A compositionally biased stretch (basic and acidic residues) spans 153–167; that stretch reads RIKDKDKDKDRDKKK. The segment covering 168 to 179 has biased composition (basic residues); that stretch reads EKSGHHDKKRKN.

This sequence belongs to the plant Mediator complex subunit 19 family. Component of the Mediator complex.

The protein resides in the nucleus. Functionally, component of the Mediator complex, a coactivator involved in the regulated transcription of nearly all RNA polymerase II-dependent genes. Mediator functions as a bridge to convey information from gene-specific regulatory proteins to the basal RNA polymerase II transcription machinery. The Mediator complex, having a compact conformation in its free form, is recruited to promoters by direct interactions with regulatory proteins and serves for the assembly of a functional preinitiation complex with RNA polymerase II and the general transcription factors. This chain is Probable mediator of RNA polymerase II transcription subunit 19b (MED19B), found in Arabidopsis thaliana (Mouse-ear cress).